The primary structure comprises 823 residues: Valine--tRNA ligase (823 aa).

The short motif at 52–62 (PTVSGVLHMGH) is the 'HIGH' region element. A 'KMSKS' region motif is present at residues 549 to 553 (KMSKS). Residue Lys-552 coordinates ATP.

This sequence belongs to the class-I aminoacyl-tRNA synthetase family. ValS type 2 subfamily. As to quaternary structure, monomer.

It is found in the cytoplasm. It carries out the reaction tRNA(Val) + L-valine + ATP = L-valyl-tRNA(Val) + AMP + diphosphate. Its function is as follows. Catalyzes the attachment of valine to tRNA(Val). As ValRS can inadvertently accommodate and process structurally similar amino acids such as threonine, to avoid such errors, it has a 'posttransfer' editing activity that hydrolyzes mischarged Thr-tRNA(Val) in a tRNA-dependent manner. The polypeptide is Valine--tRNA ligase (Anaplasma marginale (strain St. Maries)).